The primary structure comprises 29 residues: Omega-conotoxins GVIIA/GVIIB (29 aa).

Disulfide bonds link C1–C16, C8–C19, and C15–C26. A 4-hydroxyproline mark is found at P4 and P7.

In terms of tissue distribution, expressed by the venom duct.

It localises to the secreted. Its function is as follows. Omega-conotoxins act at presynaptic membranes, they bind and block voltage-gated calcium channels (Cav). This chain is Omega-conotoxins GVIIA/GVIIB, found in Conus geographus (Geography cone).